We begin with the raw amino-acid sequence, 121 residues long: UPF0344 protein BCA_1194 (121 aa).

A run of 4 helical transmembrane segments spans residues 6–26 (ITAW…YSAG), 38–58 (LMYI…MKTA), 65–85 (WYGL…MVLV), and 92–112 (ATGA…YLGL).

The protein belongs to the UPF0344 family.

Its subcellular location is the cell membrane. The chain is UPF0344 protein BCA_1194 from Bacillus cereus (strain 03BB102).